The chain runs to 423 residues: 4-hydroxy-3-methylbut-2-en-1-yl diphosphate synthase (flavodoxin) (423 aa).

[4Fe-4S] cluster contacts are provided by C307, C310, C353, and E360.

It belongs to the IspG family. [4Fe-4S] cluster serves as cofactor.

The catalysed reaction is (2E)-4-hydroxy-3-methylbut-2-enyl diphosphate + oxidized [flavodoxin] + H2O + 2 H(+) = 2-C-methyl-D-erythritol 2,4-cyclic diphosphate + reduced [flavodoxin]. The protein operates within isoprenoid biosynthesis; isopentenyl diphosphate biosynthesis via DXP pathway; isopentenyl diphosphate from 1-deoxy-D-xylulose 5-phosphate: step 5/6. Its function is as follows. Converts 2C-methyl-D-erythritol 2,4-cyclodiphosphate (ME-2,4cPP) into 1-hydroxy-2-methyl-2-(E)-butenyl 4-diphosphate. This chain is 4-hydroxy-3-methylbut-2-en-1-yl diphosphate synthase (flavodoxin), found in Brucella anthropi (strain ATCC 49188 / DSM 6882 / CCUG 24695 / JCM 21032 / LMG 3331 / NBRC 15819 / NCTC 12168 / Alc 37) (Ochrobactrum anthropi).